The sequence spans 231 residues: uncharacterized protein (231 aa).

An N-terminal signal peptide occupies residues 1–19; the sequence is MKFKFLLTPLLSSVLFLSA. C20 is lipidated: N-palmitoyl cysteine. A lipid anchor (S-diacylglycerol cysteine) is attached at C20.

The protein belongs to the MG439/MG440 family.

It is found in the cell membrane. This is an uncharacterized protein from Mycoplasma pneumoniae (strain ATCC 29342 / M129 / Subtype 1) (Mycoplasmoides pneumoniae).